The sequence spans 205 residues: Ribosomal RNA small subunit methyltransferase G (205 aa).

Residues G66, F71, 119 to 120, and R135 each bind S-adenosyl-L-methionine; that span reads IE.

This sequence belongs to the methyltransferase superfamily. RNA methyltransferase RsmG family.

The protein resides in the cytoplasm. It carries out the reaction guanosine(527) in 16S rRNA + S-adenosyl-L-methionine = N(7)-methylguanosine(527) in 16S rRNA + S-adenosyl-L-homocysteine. Its function is as follows. Specifically methylates the N7 position of guanine in position 527 of 16S rRNA. In Rhizobium etli (strain CIAT 652), this protein is Ribosomal RNA small subunit methyltransferase G.